Consider the following 141-residue polypeptide: Large ribosomal subunit protein uL11 (141 aa).

Belongs to the universal ribosomal protein uL11 family. As to quaternary structure, part of the ribosomal stalk of the 50S ribosomal subunit. Interacts with L10 and the large rRNA to form the base of the stalk. L10 forms an elongated spine to which L12 dimers bind in a sequential fashion forming a multimeric L10(L12)X complex. Post-translationally, one or more lysine residues are methylated.

Forms part of the ribosomal stalk which helps the ribosome interact with GTP-bound translation factors. This Agathobacter rectalis (strain ATCC 33656 / DSM 3377 / JCM 17463 / KCTC 5835 / VPI 0990) (Eubacterium rectale) protein is Large ribosomal subunit protein uL11.